The following is a 419-amino-acid chain: 3-isopropylmalate dehydratase large subunit (419 aa).

Residues Cys-300, Cys-360, and Cys-363 each contribute to the [4Fe-4S] cluster site.

This sequence belongs to the aconitase/IPM isomerase family. LeuC type 2 subfamily. Heterodimer of LeuC and LeuD. Requires [4Fe-4S] cluster as cofactor.

The catalysed reaction is (2R,3S)-3-isopropylmalate = (2S)-2-isopropylmalate. It functions in the pathway amino-acid biosynthesis; L-leucine biosynthesis; L-leucine from 3-methyl-2-oxobutanoate: step 2/4. Its function is as follows. Catalyzes the isomerization between 2-isopropylmalate and 3-isopropylmalate, via the formation of 2-isopropylmaleate. This chain is 3-isopropylmalate dehydratase large subunit, found in Clostridium botulinum (strain Eklund 17B / Type B).